A 483-amino-acid polypeptide reads, in one-letter code: Nucleolar protein 4 (483 aa).

Disordered regions lie at residues 210-418 (QQDE…PIPS) and 435-483 (SESR…DPQI). Over residues 211-225 (QDEDESSIESDEFDM) the composition is skewed to acidic residues. 3 stretches are compositionally biased toward polar residues: residues 229 to 254 (TRMSAVNSDLSSNLEERMQSPQTVHG), 262 to 271 (AESSNGNETL), and 302 to 317 (QPLNLSDSPSSAQLTS). 2 stretches are compositionally biased toward basic and acidic residues: residues 319-330 (FRIDDQGSDGKN) and 340-350 (LKMEREARENG). Polar residues predominate over residues 351–363 (SKSPAHSYSSYDS). Composition is skewed to basic and acidic residues over residues 364-374 (GKNESVDRGAE), 391-409 (HEDSEKVNETDGVEAERLK), and 435-451 (SESRNAAKRMRLDKAQD). A compositionally biased stretch (polar residues) spans 467 to 483 (ATYSTATVPGSQEDPQI).

The protein resides in the nucleus. Its subcellular location is the nucleolus. In Mus musculus (Mouse), this protein is Nucleolar protein 4 (Nol4).